The sequence spans 118 residues: Aspartate 1-decarboxylase (118 aa).

Residue serine 25 is the Schiff-base intermediate with substrate; via pyruvic acid of the active site. A Pyruvic acid (Ser) modification is found at serine 25. Position 57 (threonine 57) interacts with substrate. Tyrosine 58 (proton donor) is an active-site residue. 73 to 75 (GAA) lines the substrate pocket.

It belongs to the PanD family. As to quaternary structure, heterooctamer of four alpha and four beta subunits. Pyruvate is required as a cofactor. In terms of processing, is synthesized initially as an inactive proenzyme, which is activated by self-cleavage at a specific serine bond to produce a beta-subunit with a hydroxyl group at its C-terminus and an alpha-subunit with a pyruvoyl group at its N-terminus.

The protein resides in the cytoplasm. It catalyses the reaction L-aspartate + H(+) = beta-alanine + CO2. It functions in the pathway cofactor biosynthesis; (R)-pantothenate biosynthesis; beta-alanine from L-aspartate: step 1/1. Its function is as follows. Catalyzes the pyruvoyl-dependent decarboxylation of aspartate to produce beta-alanine. The polypeptide is Aspartate 1-decarboxylase (Syntrophomonas wolfei subsp. wolfei (strain DSM 2245B / Goettingen)).